The primary structure comprises 26 residues: Beta-hexosaminidase (26 aa).

Glycosylated. Detected in dry seeds and cotyledons.

The catalysed reaction is Hydrolysis of terminal non-reducing N-acetyl-D-hexosamine residues in N-acetyl-beta-D-hexosaminides.. With respect to regulation, inhibited by AgNO(3) at a concentration of 0.1 mM. Strongly inhibited by CdCl(2), ZnCl(2) and FeCl(3) and moderately by CoCl(2), CuSO(4) and NiCl(2) at 10 mM concentration. CaCl(2), MgCl(2), MnSO(4) and KI also have a slight inhibitory effect of 20%-25% at 10 mM concentration. Activated to a small extent by MgCl(2) at 0.1 mM concentration but inhibited with increasing concentration. Not affected by carbohydrates such as fucose, galactose and glucose but displays a slight decrease in activity up to 25% with lactose, alpha-mannose and N-acetyl-galactosamine (GalNAc). Functionally, has hexosaminidase activity. Active with both p-nitrophenyl-beta-D-N-acetylglucosamine (pNP-GlcNAc) and p-nitrophenyl-beta-D-N-acetylgalactosamine (pNP-GalNAc). Not active toward p-nitrophenyl-beta-D-N,N'-diacetylchitobiose (pNP-(GlcNAc)2) or p-nitrophenyl-beta-D-N,N',N''-triacetylchitobiose (pNP-(GlcNAc)3). Removes terminal GlcNAc and may be involved in storage protein degradation. In Lupinus albus (White lupine), this protein is Beta-hexosaminidase.